The primary structure comprises 895 residues: Pentatricopeptide repeat-containing protein At1g74600, chloroplastic (895 aa).

A chloroplast-targeting transit peptide spans 1–71; it reads MNCLANESLN…CNLRTTKILQ (71 aa). PPR repeat units lie at residues 83-113, 114-148, 149-183, 184-214, 215-249, 250-280, 284-314, 315-349, 350-384, 385-415, 417-451, 452-483, 484-514, 515-549, 550-584, 585-615, 616-650, 651-685, 686-716, 717-751, 752-787, and 788-818; these read DVFL…IPQP, DVVS…GFEA, NEIS…GYFF, YEVV…SLSA, NVYC…FQKP, DSYT…VIKC, DVFV…IPNP, SVVS…GVEI, NNCT…GFYL, DSSV…LDDI, RQNI…GLRT, DEFS…GLVL, DLTV…IPFK, DNAC…GTSP, DEST…GIDK, GMDL…LPEL, DPVS…GFTM, DSFA…GLCT, EPSV…INGP, DLIA…GFKP, DKVT…GIEP, and ENRH…MHIK. Residues 824–895 are type E motif; degenerate; sequence WGTLLAACKI…VQKEPGWSSV (72 aa).

Belongs to the PPR family. PCMP-E subfamily.

The protein localises to the plastid. It localises to the chloroplast. This is Pentatricopeptide repeat-containing protein At1g74600, chloroplastic (PCMP-E69) from Arabidopsis thaliana (Mouse-ear cress).